Consider the following 124-residue polypeptide: Small ribosomal subunit protein uS12 (124 aa).

Residues 1–20 (MATISQLVRNPRKDKVQKTS) form a disordered region. Position 89 is a 3-methylthioaspartic acid (aspartate 89). Residues 104–124 (TSGVTARRKGRSKYGAKRPKA) are disordered. A compositionally biased stretch (basic residues) spans 109–124 (ARRKGRSKYGAKRPKA).

The protein belongs to the universal ribosomal protein uS12 family. In terms of assembly, part of the 30S ribosomal subunit. Contacts proteins S8 and S17. May interact with IF1 in the 30S initiation complex.

Its function is as follows. With S4 and S5 plays an important role in translational accuracy. Functionally, interacts with and stabilizes bases of the 16S rRNA that are involved in tRNA selection in the A site and with the mRNA backbone. Located at the interface of the 30S and 50S subunits, it traverses the body of the 30S subunit contacting proteins on the other side and probably holding the rRNA structure together. The combined cluster of proteins S8, S12 and S17 appears to hold together the shoulder and platform of the 30S subunit. In Psychromonas ingrahamii (strain DSM 17664 / CCUG 51855 / 37), this protein is Small ribosomal subunit protein uS12.